Consider the following 206-residue polypeptide: Outer-membrane lipoprotein carrier protein (206 aa).

An N-terminal signal peptide occupies residues 1-21 (MKKLLCAVLLSPLLYSNAVLA).

It belongs to the LolA family. Monomer.

Its subcellular location is the periplasm. Participates in the translocation of lipoproteins from the inner membrane to the outer membrane. Only forms a complex with a lipoprotein if the residue after the N-terminal Cys is not an aspartate (The Asp acts as a targeting signal to indicate that the lipoprotein should stay in the inner membrane). The polypeptide is Outer-membrane lipoprotein carrier protein (Shewanella sp. (strain ANA-3)).